Here is a 186-residue protein sequence, read N- to C-terminus: MAETSSLISGVAQRYAGSLFELALDANSVASVEKDLGRFEALLSGSEDLRRLISSPVFSSEDQLHAIGAIADKAGIKGLVGNFLRVVAQNRRLFALPGIIAAFRQIAAEHRGEISADVVSAHELTSAQQNELKATLKGVAGKDVTINVTVDPSILGGLIVKMGSRQIDTSLRTKLSSLKLALKEVG.

This sequence belongs to the ATPase delta chain family. F-type ATPases have 2 components, F(1) - the catalytic core - and F(0) - the membrane proton channel. F(1) has five subunits: alpha(3), beta(3), gamma(1), delta(1), epsilon(1). F(0) has three main subunits: a(1), b(2) and c(10-14). The alpha and beta chains form an alternating ring which encloses part of the gamma chain. F(1) is attached to F(0) by a central stalk formed by the gamma and epsilon chains, while a peripheral stalk is formed by the delta and b chains.

Its subcellular location is the cell inner membrane. Its function is as follows. F(1)F(0) ATP synthase produces ATP from ADP in the presence of a proton or sodium gradient. F-type ATPases consist of two structural domains, F(1) containing the extramembraneous catalytic core and F(0) containing the membrane proton channel, linked together by a central stalk and a peripheral stalk. During catalysis, ATP synthesis in the catalytic domain of F(1) is coupled via a rotary mechanism of the central stalk subunits to proton translocation. In terms of biological role, this protein is part of the stalk that links CF(0) to CF(1). It either transmits conformational changes from CF(0) to CF(1) or is implicated in proton conduction. The protein is ATP synthase subunit delta of Brucella canis (strain ATCC 23365 / NCTC 10854 / RM-666).